The sequence spans 771 residues: Myotubularin-related protein 10 (771 aa).

A Myotubularin phosphatase domain is found at 217–657 (FETYSDWDRE…THIKLWKLCY (441 aa)). A phosphoserine mark is found at serine 603 and serine 745.

It belongs to the protein-tyrosine phosphatase family. Non-receptor class myotubularin subfamily.

The protein is Myotubularin-related protein 10 (Mtmr10) of Mus musculus (Mouse).